A 980-amino-acid polypeptide reads, in one-letter code: Zinc finger BED domain-containing protein 6 (980 aa).

The interval 1-89 is required for nucleolar localization; sequence MSVCTLSVPV…ILAKKFSKDL (89 aa). The tract at residues 89 to 109 is disordered; it reads LGSGRPVADAPASLASGAPEQ. The BED-type 1 zinc-finger motif lies at 130–187; it reads AKTSIVWHFFHVDPQYTWRAICNLCEKSVSRGKPGSHLGTSTLQRHLQARHSPHWTRA. Residues C151, C154, H175, and H180 each coordinate Zn(2+). The interval 201–239 is disordered; sequence LDLSLSPPSPGSNGSFEYIPTDSVDENRMGKKRDKSASD. Low complexity predominate over residues 203–215; the sequence is LSLSPPSPGSNGS. The BED-type 2 zinc finger occupies 265-322; it reads AKTSAVWNFFYTDPQHISRAVCNICKRSVSRGRPGSHLGTSTLQRHLQATHPIHWAVA. Residues C286, C289, H310, and H315 each contribute to the Zn(2+) site. The segment at 328–397 is disordered; sequence AIGNGLDETE…ADQDNPVHAQ (70 aa). Residues 360 to 373 show a composition bias toward acidic residues; it reads TAEDLSDSDTDEPP. S383 carries the phosphoserine modification. Residues 868–950 form an HATC (Hobo-Ac-Tam3) domain region; the sequence is VVDEYFKEKY…EQLIFLKMNL (83 aa).

In terms of tissue distribution, expressed in pancreatic islet cells and weakly expressed in surrounding exocrine tissues (at protein level). Expressed in muscle and brain (at protein level). Shows broad tissue distribution with expression detected in brain, stomach, intestine, heart, kidney, liver, lung, skeletal muscle, ovary, spleen, tail and testis.

The protein resides in the nucleus. It is found in the nucleolus. Its subcellular location is the cytoplasm. Its function is as follows. Transcriptional repressor which binds to the consensus sequence 5'-GCTCGC-3', transcription regulation may be tissue-specific. Regulates the expression of target genes such as: IGF2, PGAP6/TMEM8, ENHO, and PIANP. Acts as a transcriptional repressor of growth factor IGF2, thereby negatively regulating postnatal growth of muscles and internal organs, especially in females. Negatively regulates myoblast differentiation and myoblast mitochondrial activity via its regulation of IGF2 transcription. Negatively regulates the cell cycle of myoblasts, potentially via transcriptional regulation of the E2F family of transcription factors such as: E2F1 and E2F2. Positively regulates the cell cycle and survival of pancreatic beta cells. Binds to the CDH2 gene and may directly repress CDH2 transcription. Probably by controlling CDH2 expression, regulates pancreatic beta cell adhesion, and formation of cell-to-cell junctions between pancreatic beta cells and neural crest stem cells. May also play a role in embryonic beta cell differentiation. May play a role in insulin sensitivity and glucose clearance. In Mus musculus (Mouse), this protein is Zinc finger BED domain-containing protein 6.